Consider the following 613-residue polypeptide: UvrABC system protein C (613 aa).

The GIY-YIG domain occupies 12–89; sequence DHPGVYIMHD…IKQHRPRYNV (78 aa). Positions 199–234 constitute a UVR domain; the sequence is TALVKELKEQMEAAAARLEFEKAARLRDQLRAVQEV.

This sequence belongs to the UvrC family. As to quaternary structure, interacts with UvrB in an incision complex.

Its subcellular location is the cytoplasm. In terms of biological role, the UvrABC repair system catalyzes the recognition and processing of DNA lesions. UvrC both incises the 5' and 3' sides of the lesion. The N-terminal half is responsible for the 3' incision and the C-terminal half is responsible for the 5' incision. The chain is UvrABC system protein C from Moorella thermoacetica (strain ATCC 39073 / JCM 9320).